Consider the following 322-residue polypeptide: tRNA uridine(34) hydroxylase (322 aa).

Positions 126–220 (LAEDTVVIDA…YGKDPEVKGE (95 aa)) constitute a Rhodanese domain. The active-site Cysteine persulfide intermediate is the C180.

Belongs to the TrhO family.

It carries out the reaction uridine(34) in tRNA + AH2 + O2 = 5-hydroxyuridine(34) in tRNA + A + H2O. Catalyzes oxygen-dependent 5-hydroxyuridine (ho5U) modification at position 34 in tRNAs. This is tRNA uridine(34) hydroxylase from Shouchella clausii (strain KSM-K16) (Alkalihalobacillus clausii).